Consider the following 141-residue polypeptide: U1 small nuclear ribonucleoprotein C (141 aa).

Residues Tyr4–Leu36 form a Matrin-type zinc finger. The segment at Leu69 to Gln141 is disordered. Pro residues predominate over residues Met83–Gln97. Low complexity-rich tracts occupy residues Gly100 to Met110 and Gln124 to Gln141.

This sequence belongs to the U1 small nuclear ribonucleoprotein C family. In terms of assembly, component of the U1 snRNP. The U1 snRNP is composed of the U1 snRNA and the 7 core Sm proteins SNRPB, SNRPD1, SNRPD2, SNRPD3, SNRPE, SNRPF and SNRPG that assemble in a heptameric protein ring on the Sm site of the small nuclear RNA to form the core snRNP, and at least 3 U1 snRNP-specific proteins SNRNP70/U1-70K, SNRPA/U1-A and SNRPC/U1-C. SNRPC/U1-C interacts with U1 snRNA and the 5' splice-site region of the pre-mRNA.

It localises to the nucleus. Functionally, component of the spliceosomal U1 snRNP, which is essential for recognition of the pre-mRNA 5' splice-site and the subsequent assembly of the spliceosome. SNRPC/U1-C is directly involved in initial 5' splice-site recognition for both constitutive and regulated alternative splicing. The interaction with the 5' splice-site seems to precede base-pairing between the pre-mRNA and the U1 snRNA. Stimulates commitment or early (E) complex formation by stabilizing the base pairing of the 5' end of the U1 snRNA and the 5' splice-site region. The sequence is that of U1 small nuclear ribonucleoprotein C from Heterostelium pallidum (strain ATCC 26659 / Pp 5 / PN500) (Cellular slime mold).